A 140-amino-acid polypeptide reads, in one-letter code: Protein E6 (140 aa).

2 zinc fingers span residues 27-63 and 100-136; these read CIFC…CSEC and CICC…CRNC.

The protein belongs to the papillomaviridae E6 protein family. Forms homodimers. Interacts with ubiquitin-protein ligase UBE3A/E6-AP; this interaction stimulates UBE3A ubiquitin activity. Interacts with host BAK1.

The protein resides in the host cytoplasm. Its subcellular location is the host nucleus. Plays a major role in the induction and maintenance of cellular transformation. E6 associates with host UBE3A/E6-AP ubiquitin-protein ligase and modulates its activity. Protects host keratinocytes from apoptosis by mediating the degradation of host BAK1. May also inhibit host immune response. The chain is Protein E6 from Human papillomavirus 4.